A 255-amino-acid polypeptide reads, in one-letter code: Syntaxin-6 (255 aa).

An N-acetylserine modification is found at S2. S2 is subject to Phosphoserine. The interval 2–112 (SMEDPFFVVK…KDQMSASSVQ (111 aa)) is interaction with BLTP3B. A required for interaction with VPS51 region spans residues 2 to 168 (SMEDPFFVVK…QAQQQLIVEQ (167 aa)). At 2–234 (SMEDPFFVVK…VSHMTSDRRQ (233 aa)) the chain is on the cytoplasmic side. Positions 41–74 (EEIDWTTNELRNNLRSIEWDLEDLDETISIVEAN) form a coiled coil. Phosphoserine occurs at positions 129 and 152. Residues 163-225 (QLIVEQQDEQ…DNVMKKLAKV (63 aa)) form the t-SNARE coiled-coil homology domain. Residues 235 to 255 (WCAIAILFAVLLVVLTLFLVL) form a helical; Anchor for type IV membrane protein membrane-spanning segment.

It belongs to the syntaxin family. Identified in a complex containing STX6, STX12, VAMP4 and VTI1A. Binds EEA1. Interacts with VPS45A and GOPC. Interacts with MARCHF2; the interaction promotes MARCHF2-mediated ubiquitination and degradation of CFTR. Interacts with MARCHF3. Interacts with BLTP3B (via C-terminal coiled-coil domain). Interacts with BAIAP3; this interaction is increased in the presence of calcium. Interacts (via N-terminus) with VPS51. Interacts with VPS13B. In terms of tissue distribution, widely expressed, with relatively higher expression in brain, lung and kidney.

It is found in the golgi apparatus membrane. The protein localises to the golgi apparatus. It localises to the trans-Golgi network membrane. Its subcellular location is the recycling endosome membrane. In terms of biological role, SNARE promoting movement of transport vesicles to target membranes. Targets endosomes to the trans-Golgi network, and may therefore function in retrograde trafficking. Together with SNARE STX12, promotes movement of vesicles from endosomes to the cell membrane, and may therefore function in the endocytic recycling pathway. The sequence is that of Syntaxin-6 (Stx6) from Rattus norvegicus (Rat).